Reading from the N-terminus, the 196-residue chain is Acyl-homoserine-lactone synthase (196 aa).

It belongs to the autoinducer synthase family.

The enzyme catalyses a fatty acyl-[ACP] + S-adenosyl-L-methionine = an N-acyl-L-homoserine lactone + S-methyl-5'-thioadenosine + holo-[ACP] + H(+). Its function is as follows. Required for the synthesis of a yet unknown N-aceyl-homoserine lactone (N-aceyl-HSL), an autoinducer molecule which binds to PhzR and thus regulates phenazine production. This Pseudomonas chlororaphis (Pseudomonas aureofaciens) protein is Acyl-homoserine-lactone synthase (phzI).